Consider the following 693-residue polypeptide: Protein-glutamine gamma-glutamyltransferase E (693 aa).

Alanine 2 carries the N-acetylalanine modification. Tyrosine 111 carries the post-translational modification Phosphotyrosine. Threonine 112 carries the post-translational modification Phosphothreonine. Ca(2+)-binding residues include alanine 222, asparagine 225, asparagine 227, aspartate 228, and asparagine 230. Residue cysteine 273 is part of the active site. Ca(2+) contacts are provided by aspartate 302, aspartate 304, asparagine 306, serine 308, and aspartate 325. Catalysis depends on residues histidine 331 and aspartate 354. The Ca(2+) site is built by asparagine 394, serine 416, glutamate 444, and glutamate 449.

It belongs to the transglutaminase superfamily. Transglutaminase family. Consists of two polypeptide chains, which are synthesized as a precursor form of a single polypeptide. Requires Ca(2+) as cofactor. Activated by proteolytic processing. In vitro activation is commonly achieved by cleavage with dispase, a neutral bacterial protease. Dispase cleavage site was proposed to lie between Ser-470 and Ser-471 or between Pro-465 and Phe-466. Physiological activation may be catalyzed by CTSL and, to a lesser extent, by CTSS, but not by CTSB, CTSD nor CTSV.

It is found in the cytoplasm. The enzyme catalyses L-glutaminyl-[protein] + L-lysyl-[protein] = [protein]-L-lysyl-N(6)-5-L-glutamyl-[protein] + NH4(+). Functionally, catalyzes the calcium-dependent formation of isopeptide cross-links between glutamine and lysine residues in various proteins, as well as the conjugation of polyamines to proteins. Involved in the formation of the cornified envelope (CE), a specialized component consisting of covalent cross-links of proteins beneath the plasma membrane of terminally differentiated keratinocytes. Catalyzes small proline-rich proteins (SPRR1 and SPRR2) and LOR cross-linking to form small interchain oligomers, which are further cross-linked by TGM1 onto the growing CE scaffold. In hair follicles, involved in cross-linking structural proteins to hardening the inner root sheath. This is Protein-glutamine gamma-glutamyltransferase E (TGM3) from Homo sapiens (Human).